Here is a 389-residue protein sequence, read N- to C-terminus: Phosphopentomutase (389 aa).

Mn(2+) contacts are provided by aspartate 10, aspartate 282, histidine 287, aspartate 323, histidine 324, and histidine 335.

It belongs to the phosphopentomutase family. Mn(2+) serves as cofactor.

It is found in the cytoplasm. It carries out the reaction 2-deoxy-alpha-D-ribose 1-phosphate = 2-deoxy-D-ribose 5-phosphate. The catalysed reaction is alpha-D-ribose 1-phosphate = D-ribose 5-phosphate. It participates in carbohydrate degradation; 2-deoxy-D-ribose 1-phosphate degradation; D-glyceraldehyde 3-phosphate and acetaldehyde from 2-deoxy-alpha-D-ribose 1-phosphate: step 1/2. Functionally, isomerase that catalyzes the conversion of deoxy-ribose 1-phosphate (dRib-1-P) and ribose 1-phosphate (Rib-1-P) to deoxy-ribose 5-phosphate (dRib-5-P) and ribose 5-phosphate (Rib-5-P), respectively. This Clostridium kluyveri (strain NBRC 12016) protein is Phosphopentomutase.